Reading from the N-terminus, the 722-residue chain is Host cell factor 2 (722 aa).

Kelch repeat units follow at residues 34-79 (LMII…GFVC), 83-130 (RILV…RLGH), 207-255 (KMYV…VIGN), and 257-303 (MYIF…VSDS). 3 consecutive Fibronectin type-III domains span residues 359–460 (APSQ…VDSS), 514–604 (TPSN…TCTP), and 606–716 (FPGA…DQEK). The interval 398-476 (ATSSDSSAAP…LAPNTSNNSS (79 aa)) is disordered. Residues 419–436 (QGSNSTLHNSVSDTVNST) show a composition bias toward polar residues.

Binds KMT2A/MLL1. Component of the MLL1/MLL complex, at least composed of KMT2A/MLL1, ASH2L, RBBP5, DPY30, WDR5, MEN1, HCFC1 and HCFC2. Interacts with TASOR. In terms of tissue distribution, expressed in the spermatogonia, spermatocytes and ovary.

The protein resides in the cytoplasm. Its subcellular location is the nucleus. In Mus musculus (Mouse), this protein is Host cell factor 2 (Hcfc2).